The sequence spans 476 residues: Zinc finger protein 563 (476 aa).

In terms of domain architecture, KRAB spans 4–96 (VAFEDVAVNF…IRDSIVNNSI (93 aa)). The segment at 101-125 (DPCQSAECEEVIMGHLSLNSHIRVD) adopts a C2H2-type 1; degenerate zinc-finger fold. The segment at 169 to 191 (YECKECGKTFSSRRNLRRHMVVQ) adopts a C2H2-type 2; degenerate zinc-finger fold. C2H2-type zinc fingers lie at residues 197–219 (YKCK…ERTH), 225–247 (YECK…ERMH), 253–275 (YECK…ERTH), 281–303 (YTCK…ETTH), 309–331 (YECK…MKRH), 337–359 (HKCK…ERIH), 365–387 (YECK…MIMH), 393–415 (HKCK…EKSH), 421–443 (YECK…MVMH), and 449–471 (NKCK…EKTH).

It belongs to the krueppel C2H2-type zinc-finger protein family.

It is found in the nucleus. May be involved in transcriptional regulation. The protein is Zinc finger protein 563 (ZNF563) of Homo sapiens (Human).